Reading from the N-terminus, the 905-residue chain is Probable coatomer subunit gamma (905 aa).

HEAT repeat units lie at residues 265-302, 303-340, 374-412, 414-450, and 525-563; these read TQFR…NISD, DDLQ…TRPH, DESV…KFPR, QDSM…YIPE, and KFVQ…RDAF. Residue S604 is modified to Phosphoserine.

The protein belongs to the COPG family. Oligomeric complex that consists of at least the alpha, beta, beta', gamma, delta, epsilon and zeta subunits.

The protein localises to the cytoplasm. The protein resides in the golgi apparatus membrane. It is found in the cytoplasmic vesicle. Its subcellular location is the COPI-coated vesicle membrane. In terms of biological role, the coatomer is a cytosolic protein complex that binds to dilysine motifs and reversibly associates with Golgi non-clathrin-coated vesicles, which further mediate biosynthetic protein transport from the ER, via the Golgi up to the trans Golgi network. Coatomer complex is required for budding from Golgi membranes, and is essential for the retrograde Golgi-to-ER transport of dilysine-tagged proteins. The polypeptide is Probable coatomer subunit gamma (sec21) (Schizosaccharomyces pombe (strain 972 / ATCC 24843) (Fission yeast)).